Reading from the N-terminus, the 640-residue chain is Fructose-1,6-bisphosphatase class 3 (640 aa).

Belongs to the FBPase class 3 family. It depends on Mn(2+) as a cofactor.

It carries out the reaction beta-D-fructose 1,6-bisphosphate + H2O = beta-D-fructose 6-phosphate + phosphate. Its pathway is carbohydrate biosynthesis; gluconeogenesis. This Lactococcus lactis subsp. cremoris (strain MG1363) protein is Fructose-1,6-bisphosphatase class 3.